The sequence spans 577 residues: Arginine--tRNA ligase (577 aa).

Positions 122–132 (PNVAKEMHVGH) match the 'HIGH' region motif.

Belongs to the class-I aminoacyl-tRNA synthetase family. Monomer.

It is found in the cytoplasm. The catalysed reaction is tRNA(Arg) + L-arginine + ATP = L-arginyl-tRNA(Arg) + AMP + diphosphate. In Shigella flexneri, this protein is Arginine--tRNA ligase.